Here is a 258-residue protein sequence, read N- to C-terminus: MSGILAGLVAEAESQTGRRRALRTEAKLTELAAAAPPARDFAAALREPGLAVIAEMKPRSPSKGPLTDDYRPAELARAYQGGGAHAVSVLTHEAGFGGSPDHLAVARAACELPVLRKDFVVDEYQILEARALGADALLLIVAALAPARLAALLARTRACGMEALVEVHDEREVDVALEAGADVIGVNHRDLRDFSIDRTLSARLRGRVGTGRVMVGESGVRGAPDARALEAAGVDAVLVGELLMRAGDPGTTIKGLVG.

It belongs to the TrpC family.

The enzyme catalyses 1-(2-carboxyphenylamino)-1-deoxy-D-ribulose 5-phosphate + H(+) = (1S,2R)-1-C-(indol-3-yl)glycerol 3-phosphate + CO2 + H2O. It functions in the pathway amino-acid biosynthesis; L-tryptophan biosynthesis; L-tryptophan from chorismate: step 4/5. In terms of biological role, the function of the second trp operon in S.coelicolor is to produce tryptophan for the biosynthesis of calcium-dependent antibiotic (CDA). In Streptomyces coelicolor (strain ATCC BAA-471 / A3(2) / M145), this protein is Indole-3-glycerol phosphate synthase 2 (trpC2).